Here is a 283-residue protein sequence, read N- to C-terminus: Nucleotide-binding protein DR_1434 (283 aa).

8–15 lines the ATP pocket; that stretch reads GLSGSGKS. 57-60 is a binding site for GTP; that stretch reads DTRT.

This sequence belongs to the RapZ-like family.

Displays ATPase and GTPase activities. The sequence is that of Nucleotide-binding protein DR_1434 from Deinococcus radiodurans (strain ATCC 13939 / DSM 20539 / JCM 16871 / CCUG 27074 / LMG 4051 / NBRC 15346 / NCIMB 9279 / VKM B-1422 / R1).